We begin with the raw amino-acid sequence, 397 residues long: Corticosteroid-binding globulin (397 aa).

The first 22 residues, 1-22, serve as a signal peptide directing secretion; it reads MSLALYTCLFWLCTSGLWTTQA. 4 N-linked (GlcNAc...) asparagine glycosylation sites follow: Asn89, Asn169, Asn217, and Asn232. Gln247 contacts cortisol. An N-linked (GlcNAc...) asparagine glycan is attached at Asn253. Asp279 contacts cortisol. N-linked (GlcNAc...) asparagine glycosylation occurs at Asn320. Residue Trp385 participates in cortisol binding.

Belongs to the serpin family. Expressed by the liver; secreted in plasma.

The protein resides in the secreted. Major transport protein for glucocorticoids and progestins in the blood of almost all vertebrate species. The sequence is that of Corticosteroid-binding globulin (Serpina6) from Mus musculus (Mouse).